The sequence spans 96 residues: Protein RnfH (96 aa).

This sequence belongs to the UPF0125 (RnfH) family.

This is Protein RnfH from Salmonella agona (strain SL483).